A 377-amino-acid polypeptide reads, in one-letter code: Glutamate 5-kinase (377 aa).

Lys22 is an ATP binding site. The substrate site is built by Ser62, Asp149, and Asn161. Residues 181–182 (TD) and 223–229 (TGGMVTK) contribute to the ATP site. The 79-residue stretch at 285–363 (RGTIVVDAGA…AQLKRFLGPQ (79 aa)) folds into the PUA domain.

Belongs to the glutamate 5-kinase family.

The protein resides in the cytoplasm. It carries out the reaction L-glutamate + ATP = L-glutamyl 5-phosphate + ADP. It functions in the pathway amino-acid biosynthesis; L-proline biosynthesis; L-glutamate 5-semialdehyde from L-glutamate: step 1/2. Catalyzes the transfer of a phosphate group to glutamate to form L-glutamate 5-phosphate. The chain is Glutamate 5-kinase from Bifidobacterium longum (strain DJO10A).